The primary structure comprises 432 residues: Bouquet formation protein 4 (432 aa).

The tract at residues 1-21 (MTENEKSRSLPAERNPLYKDD) is disordered. Residues 38–147 (EFPDGPATFV…SSTPSTYATP (110 aa)) form the HTH APSES-type domain. Residues 73–94 (ATSMFRSAFPKATQEEEDLEMR) constitute a DNA-binding region (H-T-H motif). 2 stretches are compositionally biased toward low complexity: residues 139–152 (STPS…RPTA) and 163–172 (ESSTSATTTS). 2 disordered regions span residues 139-283 (STPS…GKIR) and 364-384 (KSSI…FEEN). The segment covering 180 to 228 (RLAEHLENSKKTILQHDNKEEDKEIHSEENETKDEIKSEKKEPEIKKQE) has biased composition (basic and acidic residues). Residues 229–241 (GGSSTEKVGQPSS) show a composition bias toward polar residues.

In terms of assembly, interacts with rap1.

The protein resides in the cytoplasm. The protein localises to the nucleus. It localises to the nucleus inner membrane. Connects telomeres to the nuclear envelop (NE) during both vegetative growth and meiosis. This connection ensures clustering of telomeres to the spindle pole body (SPB) when cells enter meiotic prophase. This chain is Bouquet formation protein 4 (bqt4), found in Schizosaccharomyces pombe (strain 972 / ATCC 24843) (Fission yeast).